The sequence spans 108 residues: UPF0145 protein sll118 (108 aa).

This sequence belongs to the UPF0145 family.

The protein is UPF0145 protein sll118 of Synechocystis sp. (strain ATCC 27184 / PCC 6803 / Kazusa).